Here is a 1116-residue protein sequence, read N- to C-terminus: DNA-directed RNA polymerase subunit beta (1116 aa).

A compositionally biased stretch (basic and acidic residues) spans Lys-1070 to Lys-1100. The interval Lys-1070 to Lys-1116 is disordered. Positions Gln-1101 to Lys-1116 are enriched in basic residues.

It belongs to the RNA polymerase beta chain family. As to quaternary structure, in plastids the minimal PEP RNA polymerase catalytic core is composed of four subunits: alpha, beta, beta', and beta''. When a (nuclear-encoded) sigma factor is associated with the core the holoenzyme is formed, which can initiate transcription.

The protein localises to the plastid. The protein resides in the chloroplast. The enzyme catalyses RNA(n) + a ribonucleoside 5'-triphosphate = RNA(n+1) + diphosphate. In terms of biological role, DNA-dependent RNA polymerase catalyzes the transcription of DNA into RNA using the four ribonucleoside triphosphates as substrates. This Heterosigma akashiwo (Chromophytic alga) protein is DNA-directed RNA polymerase subunit beta.